The sequence spans 152 residues: Ribosome maturation factor RimP (152 aa).

This sequence belongs to the RimP family.

Its subcellular location is the cytoplasm. Functionally, required for maturation of 30S ribosomal subunits. The polypeptide is Ribosome maturation factor RimP (Fervidobacterium nodosum (strain ATCC 35602 / DSM 5306 / Rt17-B1)).